The sequence spans 48 residues: Large ribosomal subunit protein bL33B (48 aa).

Belongs to the bacterial ribosomal protein bL33 family.

The chain is Large ribosomal subunit protein bL33B (rpmG 2) from Mycoplasmoides gallisepticum (strain R(low / passage 15 / clone 2)) (Mycoplasma gallisepticum).